A 1000-amino-acid chain; its full sequence is UPF0182 protein SCO5204 (1000 aa).

The next 7 membrane-spanning stretches (helical) occupy residues 26–48, 70–92, 121–143, 177–199, 220–237, 267–289, and 296–318; these read LLLT…GFWT, IGLF…WLAH, WLLL…GQWR, FLLG…THYL, LSVL…AYWL, LPAK…ATLW, and PVIG…PALV. 2 disordered regions span residues 884 to 908 and 943 to 1000; these read AETE…NPTV and EALQ…ADTG. Residues 888–897 show a composition bias toward acidic residues; that stretch reads QPPDEGDDTT. Basic and acidic residues-rich tracts occupy residues 943-953 and 963-984; these read EALQRAEDAQA and NGDD…DKAG.

Belongs to the UPF0182 family.

Its subcellular location is the cell membrane. The polypeptide is UPF0182 protein SCO5204 (Streptomyces coelicolor (strain ATCC BAA-471 / A3(2) / M145)).